Reading from the N-terminus, the 401-residue chain is Beta-ketoadipyl-CoA thiolase (401 aa).

C90 serves as the catalytic Acyl-thioester intermediate. Residues H357 and C387 each act as proton acceptor in the active site.

Belongs to the thiolase-like superfamily. Thiolase family.

The catalysed reaction is succinyl-CoA + acetyl-CoA = 3-oxoadipyl-CoA + CoA. It functions in the pathway aromatic compound metabolism; beta-ketoadipate pathway; acetyl-CoA and succinyl-CoA from 3-oxoadipate: step 2/2. Functionally, catalyzes thiolytic cleavage of beta-ketoadipyl-CoA to succinyl-CoA and acetyl-CoA. This chain is Beta-ketoadipyl-CoA thiolase (pcaF), found in Acinetobacter baylyi (strain ATCC 33305 / BD413 / ADP1).